The sequence spans 242 residues: Phosphate import ATP-binding protein PstB 1 (242 aa).

Positions methionine 1–isoleucine 237 constitute an ABC transporter domain. Position 28–35 (glycine 28–serine 35) interacts with ATP.

It belongs to the ABC transporter superfamily. Phosphate importer (TC 3.A.1.7) family. As to quaternary structure, the complex is composed of two ATP-binding proteins (PstB), two transmembrane proteins (PstC and PstA) and a solute-binding protein (PstS).

Its subcellular location is the cell membrane. The enzyme catalyses phosphate(out) + ATP + H2O = ADP + 2 phosphate(in) + H(+). Its function is as follows. Part of the ABC transporter complex PstSACB involved in phosphate import. Responsible for energy coupling to the transport system. The polypeptide is Phosphate import ATP-binding protein PstB 1 (Symbiobacterium thermophilum (strain DSM 24528 / JCM 14929 / IAM 14863 / T)).